We begin with the raw amino-acid sequence, 512 residues long: UDP-N-acetylglucosamine--peptide N-acetylglucosaminyltransferase GtfA subunit (512 aa).

Residue G16 to Y19 coordinates UDP. H251 provides a ligand contact to N-acetyl-D-glucosamine. Residues Q393–H394 and E413–G416 contribute to the UDP site.

The protein belongs to the glycosyltransferase group 1 family. Glycosyltransferase 4 subfamily. As to quaternary structure, forms a heterotetramer with 2 subunits each of GtfA and GtfB. Part of the accessory SecA2/SecY2 protein translocation apparatus.

It is found in the cytoplasm. The protein resides in the cell membrane. It carries out the reaction L-seryl-[protein] + UDP-N-acetyl-alpha-D-glucosamine = 3-O-[N-acetyl-alpha-D-glucosaminyl]-L-seryl-[protein] + UDP + H(+). It functions in the pathway protein modification; protein glycosylation. Required for polymorphic O-glycosylation of the serine-rich repeat protein (SRRP) in this bacteria. Catalyzes the first step in glycosylation by transferring N-acetylglucosamine from UDP-GlcNAc to serine residues in the substrate protein. Part of the accessory SecA2/SecY2 system specifically required to export serine-rich repeat cell wall proteins encoded in the same operon. The GtfA-GtfB complex adds GlcNAc from UDP-GlcNAc to SRRP (experimentally characterized with a truncated SSR1 construct); the alpha linkage was shown for this enzyme but not the residues glycosylated on SRRP. This Limosilactobacillus reuteri subsp. suis (strain ATCC 53608 / LMG 31752 / 1063) (Lactobacillus reuteri) protein is UDP-N-acetylglucosamine--peptide N-acetylglucosaminyltransferase GtfA subunit.